The primary structure comprises 377 residues: MECADYGLTRKLERDNLNLNPLQRGGVLPAAARKALHEFGDGYSVCDYCDGRLDQVTRPAINCFLDDLADFTGSDAVRTVHGAREGKFAVMHALCERGDTVVVDGNAHYTTHLAAERNGLEIVEVPSTGHPSYEVTPEAYREVLEETIDRVEVKLAVLTHVDGNYGNLTDARGVADVCRKLGVPLLLNCAYSMGRLPVNLRELGVDFVVGSGHKSMAASGPIGVLGMKSEWEDTVLRRSGRHEKKELELLGCTSRGAPLATLMASLPYVRERVSRWDGEVKKTRYLVSELEDIGGIEQLGVRPKEHDLVRFETPVFHEIAASHPRKGFFLYEELKKRGIVGIRRGQTKWFKCSIYGMTEEQVQYVVDSFRDIVEENR.

Pyridoxal 5'-phosphate is bound by residues 83–84 (AR), Asn188, and 211–213 (SGH). Lys214 is modified (N6-(pyridoxal phosphate)lysine).

It belongs to the SepCysS family. Homodimer. Interacts with SepRS. Pyridoxal 5'-phosphate serves as cofactor.

The enzyme catalyses O-phospho-L-seryl-tRNA(Cys) + hydrogen sulfide + H(+) = L-cysteinyl-tRNA(Cys) + phosphate. Functionally, converts O-phospho-L-seryl-tRNA(Cys) (Sep-tRNA(Cys)) to L-cysteinyl-tRNA(Cys) (Cys-tRNA(Cys)). This is O-phospho-L-seryl-tRNA:Cys-tRNA synthase from Methanothermobacter thermautotrophicus (strain ATCC 29096 / DSM 1053 / JCM 10044 / NBRC 100330 / Delta H) (Methanobacterium thermoautotrophicum).